Reading from the N-terminus, the 250-residue chain is MTKSFEIVFAVPMECQSCVDSVSSSLKSLNGISKYDIDLKSNLVTTEGSVPPSEIVKAIQSTGKDAIIRGTGAPNSAAVCILESFDPKDIQQPVKGLARIVSVGANDLVVDLTVNGLPQGVYYPSIRKSGNLSKGALSTGECFYPLGPLEVDQPVSESTTINSLGAASPTVEEGSLYAGQGFLHADLNISDLIGRSVILSKLKDKTAPDSLCGVIARSAGAWENDKQVCSCSGKTVWQERSEALAKGLKS.

Residues 4-67 (SFEIVFAVPM…AIQSTGKDAI (64 aa)) enclose the HMA domain. 4 residues coordinate Cu cation: C15, C18, C229, and C231.

It belongs to the CCS1 family. The cofactor is Cu(2+).

It localises to the cytoplasm. Functionally, copper chaperone for superoxide dismutase 1 (SOD1). Binds copper ions and delivers them specifically to SOD1. This Debaryomyces hansenii (strain ATCC 36239 / CBS 767 / BCRC 21394 / JCM 1990 / NBRC 0083 / IGC 2968) (Yeast) protein is Superoxide dismutase 1 copper chaperone (CCS1).